A 206-amino-acid chain; its full sequence is Thiamine-phosphate synthase (206 aa).

4-amino-2-methyl-5-(diphosphooxymethyl)pyrimidine is bound by residues 38 to 42 (QLREK) and asparagine 70. Residues aspartate 71 and aspartate 90 each coordinate Mg(2+). Position 109 (threonine 109) interacts with 4-amino-2-methyl-5-(diphosphooxymethyl)pyrimidine. Residue 135–137 (TST) participates in 2-[(2R,5Z)-2-carboxy-4-methylthiazol-5(2H)-ylidene]ethyl phosphate binding. 4-amino-2-methyl-5-(diphosphooxymethyl)pyrimidine is bound at residue lysine 138. 2-[(2R,5Z)-2-carboxy-4-methylthiazol-5(2H)-ylidene]ethyl phosphate-binding positions include glycine 165 and 185–186 (VS).

It belongs to the thiamine-phosphate synthase family. Mg(2+) is required as a cofactor.

The catalysed reaction is 2-[(2R,5Z)-2-carboxy-4-methylthiazol-5(2H)-ylidene]ethyl phosphate + 4-amino-2-methyl-5-(diphosphooxymethyl)pyrimidine + 2 H(+) = thiamine phosphate + CO2 + diphosphate. The enzyme catalyses 2-(2-carboxy-4-methylthiazol-5-yl)ethyl phosphate + 4-amino-2-methyl-5-(diphosphooxymethyl)pyrimidine + 2 H(+) = thiamine phosphate + CO2 + diphosphate. It carries out the reaction 4-methyl-5-(2-phosphooxyethyl)-thiazole + 4-amino-2-methyl-5-(diphosphooxymethyl)pyrimidine + H(+) = thiamine phosphate + diphosphate. It participates in cofactor biosynthesis; thiamine diphosphate biosynthesis; thiamine phosphate from 4-amino-2-methyl-5-diphosphomethylpyrimidine and 4-methyl-5-(2-phosphoethyl)-thiazole: step 1/1. Its function is as follows. Condenses 4-methyl-5-(beta-hydroxyethyl)thiazole monophosphate (THZ-P) and 2-methyl-4-amino-5-hydroxymethyl pyrimidine pyrophosphate (HMP-PP) to form thiamine monophosphate (TMP). The sequence is that of Thiamine-phosphate synthase from Fusobacterium nucleatum subsp. nucleatum (strain ATCC 25586 / DSM 15643 / BCRC 10681 / CIP 101130 / JCM 8532 / KCTC 2640 / LMG 13131 / VPI 4355).